The following is a 515-amino-acid chain: Maturase K (515 aa).

The protein belongs to the intron maturase 2 family. MatK subfamily.

The protein resides in the plastid. The protein localises to the chloroplast. In terms of biological role, usually encoded in the trnK tRNA gene intron. Probably assists in splicing its own and other chloroplast group II introns. The polypeptide is Maturase K (Pinus coulteri (Coulter pine)).